An 861-amino-acid chain; its full sequence is Actin-binding LIM protein 1 (861 aa).

4 consecutive LIM zinc-binding domains span residues 97–156, 156–216, 224–283, and 283–343; these read IHCH…MYGT, TRCH…MSSS, SNCA…LFGV, and VKCE…TKTE. Serine 216 carries the post-translational modification Phosphoserine. Positions 374–414 are disordered; sequence LQLLSPPCLTNSNKNPRQPTRTSSESIYSRPGSSIPGSPGH. The segment covering 381–400 has biased composition (polar residues); sequence CLTNSNKNPRQPTRTSSESI. A compositionally biased stretch (low complexity) spans 404–413; it reads PGSSIPGSPG. At serine 411 the chain carries Phosphoserine. Phosphotyrosine occurs at positions 417 and 440. 2 disordered regions span residues 459–590 and 634–682; these read EDKQ…PTYA and FPAA…ELLR. Phosphoserine is present on residues serine 466, serine 470, and serine 475. Polar residues predominate over residues 467–478; that stretch reads LGESPRTLSPTP. Threonine 477 is modified (phosphothreonine). A Phosphoserine modification is found at serine 479. Tyrosine 483 carries the post-translational modification Phosphotyrosine. The segment covering 493–518 has biased composition (polar residues); the sequence is RSTSQGSINSPVYSRHSYTPTTSRSP. Serine 496, serine 499, and serine 502 each carry phosphoserine. Low complexity predominate over residues 536 to 546; that stretch reads PLRTSSFSSTH. A phosphoserine mark is found at serine 582 and serine 671. Positions 673 to 723 form a coiled coil; the sequence is REEDEEELLRRRQLQEEQLMKLNSGLGQLILKEEMEKESRERASLASRYDS. Residue lysine 704 forms a Glycyl lysine isopeptide (Lys-Gly) (interchain with G-Cter in SUMO2) linkage. Positions 713–748 are disordered; the sequence is ERASLASRYDSPLHSASHAPSSKTSSLPGYGKNGLH. Phosphoserine is present on residues serine 723, serine 738, serine 760, and serine 789. A compositionally biased stretch (low complexity) spans 724 to 738; the sequence is PLHSASHAPSSKTSS. The HP domain occupies 793–861; sequence MLEPKIFPYE…NDMKKKAKLF (69 aa).

Binds F-actin. Interacts with ABRA. Isoform 1 is detected in adult retina, where it is highly expressed in the ganglion layer. Detected in rod inner segment. Isoform 2 is highly expressed in adult retina, brain, kidney and heart. Isoform 3 is highly expressed in adult retina, brain, kidney, liver, skeletal muscle, spleen and heart. Detected in embryonic retina, brain, spinal cord, peripheral sensory ganglia and thymus.

Its subcellular location is the cytoplasm. It localises to the cytoskeleton. Its function is as follows. May act as scaffold protein. May play a role in the development of the retina. Has been suggested to play a role in axon guidance. The polypeptide is Actin-binding LIM protein 1 (Ablim1) (Mus musculus (Mouse)).